The chain runs to 419 residues: 3-oxo-isoapionate-4-phosphate decarboxylase (419 aa).

Residues lysine 179, aspartate 181, and glutamate 182 each contribute to the Mg(2+) site. Lysine 179 carries the N6-carboxylysine modification.

The protein belongs to the RuBisCO large chain family. It depends on Mg(2+) as a cofactor.

The catalysed reaction is 3-oxoisoapionate 4-phosphate + H(+) = L-erythrulose 1-phosphate + CO2. It participates in carbohydrate metabolism. Functionally, involved in catabolism of D-apiose. Catalyzes the decarboxylation of 3-oxo-isoapionate 4-phosphate to L-erythrulose 1-phosphate. The chain is 3-oxo-isoapionate-4-phosphate decarboxylase from Rhizobium rhizogenes (strain K84 / ATCC BAA-868) (Agrobacterium radiobacter).